The sequence spans 145 residues: uncharacterized protein (145 aa).

This is an uncharacterized protein from Homo sapiens (Human).